The primary structure comprises 187 residues: Sodium/potassium ATPase inhibitor SPAI-2 (187 aa).

A signal peptide spans 1–21 (MRSRSFLVLVAVFLICETLVA). Position 22 is a pyrrolidone carboxylic acid (Gln22). Positions 22 to 126 (QRLDRIRGPK…NAQLPDKVQD (105 aa)) are excised as a propeptide. Residues 28-98 (RGPKGQGQDP…QDPVKAELPD (71 aa)) are disordered. A run of 14 repeats spans residues 34-39 (GQDPVE), 40-45 (GQDQDE), 46-51 (GPGPVK), 58-63 (GQDPVK), 64-69 (GQDPVK), 70-75 (GQDPVK), 76-81 (GQDPVK), 82-87 (GQDLVK), 88-93 (SQDPVK), 100-105 (GQDVVK), 106-111 (GHEPVE), 112-117 (GQDPVN), 118-123 (AQLPDK), and 124-129 (VQDPVK). The segment at 34–129 (GQDPVEGQDQ…LPDKVQDPVK (96 aa)) is 14 X 6 AA approximate tandem repeats. Residues 64-85 (GQDPVKGQDPVKGQDPVKGQDL) form an SVP-1 clotting 1 repeat. One can recognise a WAP domain in the interval 139–187 (LLSKRGHCPRILFRCPLSNPSNKCWRDYDCPGVKKCCEGFCGKDCLYPK). Intrachain disulfides connect Cys146-Cys175, Cys153-Cys179, Cys162-Cys174, and Cys168-Cys183.

In terms of processing, the short form (AA 127-187) may be an artifact due to the strongly acidic conditions of the duodenum. The pro-SPAI form may be the native form. In terms of tissue distribution, small intestine &gt; large intestine. The plasma contains the pro-SPAI form circulating.

In terms of biological role, inhibits Na(+),K(+) ATPase by the competitive mode against Na(+). This chain is Sodium/potassium ATPase inhibitor SPAI-2, found in Sus scrofa (Pig).